Consider the following 199-residue polypeptide: Recombination protein RecR (199 aa).

The C4-type zinc finger occupies 56–71 (CSICFNWSAEDPCEIC). The region spanning 79-174 (SLWCVVADVK…TLRMTRLAFG (96 aa)) is the Toprim domain.

This sequence belongs to the RecR family.

In terms of biological role, may play a role in DNA repair. It seems to be involved in an RecBC-independent recombinational process of DNA repair. It may act with RecF and RecO. This is Recombination protein RecR from Synechococcus sp. (strain JA-2-3B'a(2-13)) (Cyanobacteria bacterium Yellowstone B-Prime).